A 335-amino-acid polypeptide reads, in one-letter code: Cholinephosphotransferase 1 (335 aa).

Helical transmembrane passes span 53–73 (PNAI…PLIA) and 84–108 (FWAY…GKQA). CDP-choline is bound at residue asparagine 54. The Mg(2+) site is built by aspartate 101 and aspartate 104. Arginine 109 is a CDP-choline binding site. A run of 6 helical transmembrane segments spans residues 116–140 (PLGE…SCIA), 151–169 (FFCC…WQTY), 181–197 (VTEV…VSAF), 213–238 (ELKF…RIIF), 267–276 (IGPGLLFLDQ), and 284–313 (EYVV…IAAH). Aspartate 122 lines the Mg(2+) pocket. The Proton acceptor role is filled by histidine 123. Aspartate 126 provides a ligand contact to Mg(2+).

The protein belongs to the CDP-alcohol phosphatidyltransferase class-I family. Requires Mg(2+) as cofactor. It depends on Mn(2+) as a cofactor.

Its subcellular location is the golgi apparatus membrane. It catalyses the reaction CDP-choline + a 1,2-diacyl-sn-glycerol = a 1,2-diacyl-sn-glycero-3-phosphocholine + CMP + H(+). It carries out the reaction 1-octadecanoyl-2-(5Z,8Z,11Z,14Z-eicosatetraenoyl)-sn-glycerol + CDP-choline = 1-octadecanoyl-2-(5Z,8Z,11Z,14Z-eicosatetraenoyl)-sn-glycero-3-phosphocholine + CMP + H(+). The enzyme catalyses 1-hexadecanoyl-2-(9Z-octadecenoyl)-sn-glycerol + CDP-choline = 1-hexadecanoyl-2-(9Z-octadecenoyl)-sn-glycero-3-phosphocholine + CMP + H(+). The catalysed reaction is 1-hexadecanoyl-2-(4Z,7Z,10Z,13Z,16Z,19Z-docosahexaenoyl)-sn-glycerol + CDP-choline = 1-hexadecanoyl-2-(4Z,7Z,10Z,13Z,16Z,19Z-docosahexaenoyl)-sn-glycero-3-phosphocholine + CMP + H(+). It catalyses the reaction 1,2-dioctanoyl-sn-glycerol + CDP-choline = 1,2-dioctanoyl-sn-glycero-3-phosphocholine + CMP + H(+). The protein operates within phospholipid metabolism; phosphatidylcholine biosynthesis; phosphatidylcholine from phosphocholine: step 2/2. Catalyzes the final step of de novo phosphatidylcholine (PC) synthesis, i.e. the transfer of choline phosphate from CDP-choline to the free hydroxyl of a diacylglycerol (DAG), producing a PC. It thereby plays a central role in the formation and maintenance of vesicular membranes. This Gallus gallus (Chicken) protein is Cholinephosphotransferase 1 (CHPT1).